A 360-amino-acid chain; its full sequence is MTTQRLKIPRSTRHQHSGRDCDGMDIEFVRRLNERIIIWRTLRAESRLVVMLALIALDSSLCTYVTPNKQPRKAKWVEIFMYLTRPKNLYLSRKEFHILFLANGTRAYSVTATLRIHPILHEGSSADVIFFSNVSSTEAYAIIPDVTSEFLPTTPCIELDIDVFVERTQPPDDPHNCIPISIGVWWSFSKRRFYYLRMEESLLAICPAGWQQRSLSATLAKFINHESGCRECREHCDLHIDAYNVLWECGSFGHTCLCRGPCMWIKARQRDLLVEGDKSLGCVLFMDMVNSVRLITNPSTETRITERLEDVIVAGVGYSNIPVNSCGWHLVCLPEIWSAIMIQGCIRLTRLCNDRQPNVV.

Belongs to the herpesviridae cytoplasmic envelopment protein 2 family. In terms of assembly, interacts with cytoplasmic envelopment protein 3 and with the capsid.

The protein resides in the virion tegument. Its subcellular location is the host cytoplasm. The protein localises to the host nucleus. In terms of biological role, plays a critical role in cytoplasmic virus egress. Participates in the final step of tegumentation and envelope acquisition within the host cytoplasm by directly interacting with the capsid. Upon virion binding to target cell, a signaling cascade is triggered to disrupt the interaction with the capsid, thereby preparing capsid uncoating. The chain is Cytoplasmic envelopment protein 2 (MDV028) from Gallus gallus (Chicken).